A 185-amino-acid polypeptide reads, in one-letter code: MISVNDFKTGLTISVDNGIWKVIDFQHVKPGKGSAFVRSKLRNLRTGAIQEKTFRAGEKVEPAMIENRRMQYLYDDGDMHVFMDNQTFEQTELPGDYLENELKFLKANMEVQIQTYEGETIGVELPKTVELTVTETEPGIKGDTATGATKSATVETGYTLNVPLFVNEGDVLVINTGDGSYVSRA.

Belongs to the elongation factor P family.

The protein localises to the cytoplasm. Its pathway is protein biosynthesis; polypeptide chain elongation. Functionally, involved in peptide bond synthesis. Stimulates efficient translation and peptide-bond synthesis on native or reconstituted 70S ribosomes in vitro. Probably functions indirectly by altering the affinity of the ribosome for aminoacyl-tRNA, thus increasing their reactivity as acceptors for peptidyl transferase. The polypeptide is Elongation factor P (Staphylococcus carnosus (strain TM300)).